Here is a 389-residue protein sequence, read N- to C-terminus: Cytochrome b (389 aa).

Transmembrane regions (helical) follow at residues 36 to 56 (MGSL…FLAM), 80 to 102 (WLIR…THIA), 117 to 137 (VWTV…LGYC), and 183 to 203 (FFAF…MHMM). Residues H86 and H100 each contribute to the heme b site. 2 residues coordinate heme b: H187 and H201. An a ubiquinone-binding site is contributed by H206. A run of 4 helical transmembrane segments spans residues 229–249 (FVFK…LFVF), 293–313 (LLGV…PITD), 325–345 (LSKF…IIGM), and 352–372 (FVLI…IIVP).

Belongs to the cytochrome b family. In terms of assembly, fungal cytochrome b-c1 complex contains 10 subunits; 3 respiratory subunits, 2 core proteins and 5 low-molecular weight proteins. Cytochrome b-c1 complex is a homodimer. Heme b serves as cofactor.

Its subcellular location is the mitochondrion inner membrane. In terms of biological role, component of the ubiquinol-cytochrome c reductase complex (complex III or cytochrome b-c1 complex) that is part of the mitochondrial respiratory chain. The b-c1 complex mediates electron transfer from ubiquinol to cytochrome c. Contributes to the generation of a proton gradient across the mitochondrial membrane that is then used for ATP synthesis. The polypeptide is Cytochrome b (COB) (Vanderwaltozyma polyspora (strain ATCC 22028 / DSM 70294 / BCRC 21397 / CBS 2163 / NBRC 10782 / NRRL Y-8283 / UCD 57-17) (Kluyveromyces polysporus)).